A 170-amino-acid chain; its full sequence is NADPH-dependent 7-cyano-7-deazaguanine reductase (170 aa).

Cysteine 58 serves as the catalytic Thioimide intermediate. The active-site Proton donor is the aspartate 65. Residues 80–82 and 99–100 contribute to the substrate site; these read VES and HE.

Belongs to the GTP cyclohydrolase I family. QueF type 1 subfamily.

It localises to the cytoplasm. It carries out the reaction 7-aminomethyl-7-carbaguanine + 2 NADP(+) = 7-cyano-7-deazaguanine + 2 NADPH + 3 H(+). The protein operates within tRNA modification; tRNA-queuosine biosynthesis. In terms of biological role, catalyzes the NADPH-dependent reduction of 7-cyano-7-deazaguanine (preQ0) to 7-aminomethyl-7-deazaguanine (preQ1). This is NADPH-dependent 7-cyano-7-deazaguanine reductase from Bdellovibrio bacteriovorus (strain ATCC 15356 / DSM 50701 / NCIMB 9529 / HD100).